A 342-amino-acid polypeptide reads, in one-letter code: Autoinducer 2 import system permease protein LsrC (342 aa).

The Periplasmic segment spans residues 1–13 (MLKFIQNNREITA). A helical membrane pass occupies residues 14 to 34 (LLAVVLLFVLPGFLDRQYLSV). Residues 35-38 (QTLT) are Cytoplasmic-facing. The helical transmembrane segment at 39 to 59 (MVYSSAQILILLAMGATLVML) threads the bilayer. Topologically, residues 60–69 (TRNIDVSVGS) are periplasmic. The chain crosses the membrane as a helical span at residues 70–90 (ITGMCAVLLGMLLNAGYSLPV). Topologically, residues 91-92 (AC) are cytoplasmic. A helical membrane pass occupies residues 93 to 113 (VATLLLGLLAGFFNGALVAWL). Residue lysine 114 is a topological domain, periplasmic. A helical transmembrane segment spans residues 115–135 (IPAIVATLGTLGLYRGIMLLW). Topologically, residues 136-154 (TGGKWIEGLPAELKQLSAP) are cytoplasmic. A helical membrane pass occupies residues 155–175 (LLLGISAIGWLTIILVAFMAW). The Periplasmic portion of the chain corresponds to 176–212 (LLAKTAFGRSFYATGDNLQGARQLGVRTEAIRIVAFS). Residues 213-233 (LNGCMAALAGIVFASQIGFIL) form a helical membrane-spanning segment. Residues 234 to 251 (NQTGTGLEMKAIAACVLG) are Cytoplasmic-facing. The chain crosses the membrane as a helical span at residues 252 to 272 (GISLLGGSGAIIGAVLGAWFL). Residues 273-283 (TQIDSVLVLLR) are Periplasmic-facing. Residues 284 to 304 (IPAWWNDFIAGLVLLAVLVFD) traverse the membrane as a helical segment. Topologically, residues 305 to 342 (GRLRCALERNLRRQKYARFMTPPPSVKPASSGKKREAA) are cytoplasmic.

Belongs to the binding-protein-dependent transport system permease family. AraH/RbsC subfamily. In terms of assembly, the complex is composed of two ATP-binding proteins (LsrA), two transmembrane proteins (LsrC and LsrD) and a solute-binding protein (LsrB).

It is found in the cell inner membrane. Part of the ABC transporter complex LsrABCD involved in autoinducer 2 (AI-2) import. Probably responsible for the translocation of the substrate across the membrane. This chain is Autoinducer 2 import system permease protein LsrC (lsrC), found in Shigella flexneri.